The primary structure comprises 190 residues: UPF0200 protein TSIB_0920 (190 aa).

7 to 14 (GMPGSGKG) provides a ligand contact to ATP.

This sequence belongs to the UPF0200 family.

In Thermococcus sibiricus (strain DSM 12597 / MM 739), this protein is UPF0200 protein TSIB_0920.